Reading from the N-terminus, the 496-residue chain is MKKYILSLDQGTTSSRAILFNKKGEIVHSAQKEFTQHFPKPGWVEHNAQEIWGSILAVIATCLSEADVKPEQIAGIGITNQRETAVVWDKTTGKPIYNAIVWQSRQTAEICDELKEKGYSEMVREKTGLLIDAYFSGTKVKWILDNVEGAREKAENGDLLFGTIDTWLVWKLSGGKAHVTDYSNASRTLMFNIHDLQWDDELLDMLTVPKSMLPEVRPSSEVYGETIDYHFFGQNVPIAGVAGDQQAALFGQACFGEGMAKNTYGTGCFMLMNTGEKAVASEHGLLTTIAWGIDGKVNYALEGSIFVAGSAIQWLRDGMRMFKDASESEVYASRVESTDGVYVVPAFVGLGTPYWDSEVRGAMFGVTRGTTKEHFIRATLESLAYQTKDVLCAMEADSGIELKTLRVDGGAVKNNFLMKFQSDILDVPVERPVINETTALGAAYLAGLAVGYWKNQDEIKEQWHMDKRFEPTMEAEISEELYAGWKKAIEATKAFK.

An ADP-binding site is contributed by Thr-12. Residues Thr-12, Thr-13, and Ser-14 each contribute to the ATP site. A sn-glycerol 3-phosphate-binding site is contributed by Thr-12. Arg-16 provides a ligand contact to ADP. Residues Arg-82, Glu-83, and Tyr-134 each coordinate sn-glycerol 3-phosphate. Residues Arg-82, Glu-83, and Tyr-134 each contribute to the glycerol site. Residue His-230 is modified to Phosphohistidine; by HPr. Asp-244 contributes to the sn-glycerol 3-phosphate binding site. The glycerol site is built by Asp-244 and Gln-245. ADP is bound by residues Thr-266 and Gly-309. ATP-binding residues include Thr-266, Gly-309, Gln-313, and Gly-410. Positions 410 and 414 each coordinate ADP.

Belongs to the FGGY kinase family. In terms of assembly, homotetramer and homodimer (in equilibrium). Post-translationally, the phosphoenolpyruvate-dependent sugar phosphotransferase system (PTS), including enzyme I, and histidine-containing protein (HPr) are required for the phosphorylation, which leads to the activation of the enzyme.

The catalysed reaction is glycerol + ATP = sn-glycerol 3-phosphate + ADP + H(+). It functions in the pathway polyol metabolism; glycerol degradation via glycerol kinase pathway; sn-glycerol 3-phosphate from glycerol: step 1/1. Its activity is regulated as follows. Activated by phosphorylation and inhibited by fructose 1,6-bisphosphate (FBP). Its function is as follows. Key enzyme in the regulation of glycerol uptake and metabolism. Catalyzes the phosphorylation of glycerol to yield sn-glycerol 3-phosphate. This Bacillus cereus (strain Q1) protein is Glycerol kinase.